The sequence spans 657 residues: Glycogen debranching enzyme (657 aa).

Asp336 acts as the Nucleophile in catalysis. Glu371 functions as the Proton donor in the catalytic mechanism. Positions Ala460–Gly481 are disordered.

The protein belongs to the glycosyl hydrolase 13 family.

The catalysed reaction is Hydrolysis of (1-&gt;6)-alpha-D-glucosidic linkages to branches with degrees of polymerization of three or four glucose residues in limit dextrin.. Its pathway is glycan degradation; glycogen degradation. In terms of biological role, removes maltotriose and maltotetraose chains that are attached by 1,6-alpha-linkage to the limit dextrin main chain, generating a debranched limit dextrin. The chain is Glycogen debranching enzyme from Escherichia coli O157:H7.